A 673-amino-acid chain; its full sequence is UvrABC system protein B (673 aa).

Positions 26 to 183 (EGLEDGLAHQ…RRLAELQYTR (158 aa)) constitute a Helicase ATP-binding domain. 39–46 (GVTGSGKT) contributes to the ATP binding site. The short motif at 92–115 (YYDYYQPEAYVPSSDTFIEKDASV) is the Beta-hairpin element. The region spanning 431–597 (QVDDLLSEIR…GLNKKVVDIL (167 aa)) is the Helicase C-terminal domain. One can recognise a UVR domain in the interval 633 to 668 (QQKIHELEGQMMQHAQNLEFEEAAQIRDQLHQLREL).

It belongs to the UvrB family. As to quaternary structure, forms a heterotetramer with UvrA during the search for lesions. Interacts with UvrC in an incision complex.

The protein resides in the cytoplasm. Functionally, the UvrABC repair system catalyzes the recognition and processing of DNA lesions. A damage recognition complex composed of 2 UvrA and 2 UvrB subunits scans DNA for abnormalities. Upon binding of the UvrA(2)B(2) complex to a putative damaged site, the DNA wraps around one UvrB monomer. DNA wrap is dependent on ATP binding by UvrB and probably causes local melting of the DNA helix, facilitating insertion of UvrB beta-hairpin between the DNA strands. Then UvrB probes one DNA strand for the presence of a lesion. If a lesion is found the UvrA subunits dissociate and the UvrB-DNA preincision complex is formed. This complex is subsequently bound by UvrC and the second UvrB is released. If no lesion is found, the DNA wraps around the other UvrB subunit that will check the other stand for damage. This Salmonella arizonae (strain ATCC BAA-731 / CDC346-86 / RSK2980) protein is UvrABC system protein B.